The sequence spans 147 residues: Nucleoside diphosphate kinase (147 aa).

Residues Lys-9, Phe-57, Arg-85, Thr-91, Arg-102, and Asn-112 each coordinate ATP. Residue His-115 is the Pros-phosphohistidine intermediate of the active site.

It belongs to the NDK family. In terms of assembly, homotetramer. It depends on Mg(2+) as a cofactor.

The protein resides in the cytoplasm. The enzyme catalyses a 2'-deoxyribonucleoside 5'-diphosphate + ATP = a 2'-deoxyribonucleoside 5'-triphosphate + ADP. It catalyses the reaction a ribonucleoside 5'-diphosphate + ATP = a ribonucleoside 5'-triphosphate + ADP. Major role in the synthesis of nucleoside triphosphates other than ATP. The ATP gamma phosphate is transferred to the NDP beta phosphate via a ping-pong mechanism, using a phosphorylated active-site intermediate. The sequence is that of Nucleoside diphosphate kinase from Thermosipho africanus (strain TCF52B).